A 295-amino-acid polypeptide reads, in one-letter code: 15-cis-phytoene synthase (295 aa).

The protein belongs to the phytoene/squalene synthase family. ATP is required as a cofactor. It depends on Mn(2+) as a cofactor.

The enzyme catalyses 2 (2E,6E,10E)-geranylgeranyl diphosphate = 15-cis-phytoene + 2 diphosphate. The protein operates within carotenoid biosynthesis; phytoene biosynthesis. Significant inhibition is seen at GGPP concentrations above 100 uM. In terms of biological role, involved in the biosynthesis of carotenoids. Catalyzes stereoselectively the condensation of two molecules of geranylgeranyl diphosphate (GGPP) to give prephytoene diphosphate (PPPP) and the subsequent rearrangement of the cyclopropylcarbinyl intermediate to yield 15-cis-phytoene. The chain is 15-cis-phytoene synthase (crtB) from Enterobacter agglomerans (Erwinia herbicola).